The following is a 244-amino-acid chain: Extracellular superoxide dismutase [Cu-Zn] (244 aa).

The first 18 residues, 1–18, serve as a signal peptide directing secretion; that stretch reads MLALVCSCLLLAALPADT. Intrachain disulfides connect Cys-67–Cys-212 and Cys-129–Cys-211. Asn-111 carries an N-linked (GlcNAc...) asparagine glycan. Cu cation is bound by residues His-118, His-120, and His-135. Residues His-135, His-143, His-146, and Asp-149 each contribute to the Zn(2+) site. Residue His-185 participates in Cu cation binding. The interval 221 to 244 is disordered; the sequence is PWARQAQEHAERKKRRRESECKAA. Over residues 226-244 the composition is skewed to basic and acidic residues; sequence AQEHAERKKRRRESECKAA.

This sequence belongs to the Cu-Zn superoxide dismutase family. Homotetramer. Directly interacts with ATP7A; this interaction is copper-dependent and is required for SOD3 activity. Requires Cu cation as cofactor. It depends on Zn(2+) as a cofactor.

It localises to the secreted. The protein resides in the extracellular space. Its subcellular location is the golgi apparatus. The protein localises to the trans-Golgi network. The enzyme catalyses 2 superoxide + 2 H(+) = H2O2 + O2. Its function is as follows. Protect the extracellular space from toxic effect of reactive oxygen intermediates by converting superoxide radicals into hydrogen peroxide and oxygen. This chain is Extracellular superoxide dismutase [Cu-Zn] (SOD3), found in Oryctolagus cuniculus (Rabbit).